Reading from the N-terminus, the 110-residue chain is uncharacterized protein (110 aa).

The first 16 residues, Met1–Ala16, serve as a signal peptide directing secretion. Residue Cys17 is the site of N-palmitoyl cysteine attachment. Cys17 carries the S-diacylglycerol cysteine lipid modification.

The protein localises to the cell membrane. This is an uncharacterized protein from Salmonella typhimurium (strain LT2 / SGSC1412 / ATCC 700720).